A 391-amino-acid chain; its full sequence is Apolipoprotein A-IV (391 aa).

An N-terminal signal peptide occupies residues Met-1–Ala-20. Tandem repeats lie at residues Asp-33–Val-54, Thr-60–Val-81, Pro-82–Gln-103, Pro-115–Arg-136, Pro-137–Thr-158, Pro-159–Val-180, Pro-181–Thr-202, Pro-203–Ala-224, Pro-225–Lys-246, Lys-247–Ala-268, Pro-269–Gln-286, Lys-287–Glu-308, and Pro-309–Gly-330. Residues Asp-33–Gly-330 form a 13 X 22 AA approximate tandem repeats region. Ser-333 is modified (phosphoserine). A disordered region spans residues Phe-354 to Ser-391. A compositionally biased stretch (low complexity) spans Pro-371–Ser-391.

This sequence belongs to the apolipoprotein A1/A4/E family. In terms of assembly, homodimer. As to expression, secreted in plasma.

It localises to the secreted. Its function is as follows. May have a role in chylomicrons and VLDL secretion and catabolism. Required for efficient activation of lipoprotein lipase by ApoC-II; potent activator of LCAT. Apoa-IV is a major component of HDL and chylomicrons. The sequence is that of Apolipoprotein A-IV (Apoa4) from Rattus norvegicus (Rat).